Here is a 547-residue protein sequence, read N- to C-terminus: Chaperonin GroEL (547 aa).

ATP is bound by residues Thr30–Pro33, Lys51, Asp87–Thr91, Gly415, and Asp496.

This sequence belongs to the chaperonin (HSP60) family. In terms of assembly, forms a cylinder of 14 subunits composed of two heptameric rings stacked back-to-back. Interacts with the co-chaperonin GroES.

The protein localises to the cytoplasm. The enzyme catalyses ATP + H2O + a folded polypeptide = ADP + phosphate + an unfolded polypeptide.. Its function is as follows. Together with its co-chaperonin GroES, plays an essential role in assisting protein folding. The GroEL-GroES system forms a nano-cage that allows encapsulation of the non-native substrate proteins and provides a physical environment optimized to promote and accelerate protein folding. The polypeptide is Chaperonin GroEL (Chlorobium limicola (strain DSM 245 / NBRC 103803 / 6330)).